The chain runs to 403 residues: Aspartic protease PEP1 (403 aa).

A signal peptide spans 1 to 20; that stretch reads MVQISQIGAVLAVCSTLTVA. A propeptide spans 21–67 (activation peptide); sequence APTKGKARFNVPQVAVPMKAVHHPAVAYARALHKFGMKVPKAVSDAA. The 319-residue stretch at 82-400 folds into the Peptidase A1 domain; it reads YVTQVTVGQG…DTEGPRIGFA (319 aa). Residue D98 is part of the active site. N159 and N270 each carry an N-linked (GlcNAc...) asparagine glycan. D293 is an active-site residue. C329 and C361 are joined by a disulfide.

The protein belongs to the peptidase A1 family.

The protein localises to the secreted. It carries out the reaction Hydrolysis of proteins with broad specificity. Generally favors hydrophobic residues in P1 and P1', but also accepts Lys in P1, which leads to activation of trypsinogen. Does not clot milk.. Its function is as follows. Secreted aspartic endopeptidase that allows assimilation of proteinaceous substrates. Can catalyze hydrolysis of the major structural proteins of basement membrane, elastin, collagen, and laminin. Thought to play a significant role in virulence. The sequence is that of Aspartic protease PEP1 (PEP1) from Arthroderma benhamiae (strain ATCC MYA-4681 / CBS 112371) (Trichophyton mentagrophytes).